Consider the following 89-residue polypeptide: Small ribosomal subunit protein uS15 (89 aa).

This sequence belongs to the universal ribosomal protein uS15 family. Part of the 30S ribosomal subunit. Forms a bridge to the 50S subunit in the 70S ribosome, contacting the 23S rRNA.

In terms of biological role, one of the primary rRNA binding proteins, it binds directly to 16S rRNA where it helps nucleate assembly of the platform of the 30S subunit by binding and bridging several RNA helices of the 16S rRNA. Its function is as follows. Forms an intersubunit bridge (bridge B4) with the 23S rRNA of the 50S subunit in the ribosome. In Paramagnetospirillum magneticum (strain ATCC 700264 / AMB-1) (Magnetospirillum magneticum), this protein is Small ribosomal subunit protein uS15.